The chain runs to 130 residues: Small ribosomal subunit protein uS8 (130 aa).

Belongs to the universal ribosomal protein uS8 family. Part of the 30S ribosomal subunit. Contacts proteins S5 and S12.

In terms of biological role, one of the primary rRNA binding proteins, it binds directly to 16S rRNA central domain where it helps coordinate assembly of the platform of the 30S subunit. The polypeptide is Small ribosomal subunit protein uS8 (Shewanella loihica (strain ATCC BAA-1088 / PV-4)).